A 571-amino-acid polypeptide reads, in one-letter code: Urease subunit alpha (571 aa).

Positions Gly133 to Phe571 constitute a Urease domain. His138, His140, and Lys221 together coordinate Ni(2+). Lys221 is subject to N6-carboxylysine. Residue His223 coordinates substrate. Positions 250 and 276 each coordinate Ni(2+). His324 functions as the Proton donor in the catalytic mechanism. Position 364 (Asp364) interacts with Ni(2+).

The protein belongs to the metallo-dependent hydrolases superfamily. Urease alpha subunit family. As to quaternary structure, heterotrimer of UreA (gamma), UreB (beta) and UreC (alpha) subunits. Three heterotrimers associate to form the active enzyme. The cofactor is Ni cation. Carboxylation allows a single lysine to coordinate two nickel ions.

The protein resides in the cytoplasm. It catalyses the reaction urea + 2 H2O + H(+) = hydrogencarbonate + 2 NH4(+). It functions in the pathway nitrogen metabolism; urea degradation; CO(2) and NH(3) from urea (urease route): step 1/1. In Staphylococcus xylosus, this protein is Urease subunit alpha.